The chain runs to 284 residues: MLLATFKLCAGSSYRHLRNMKGLRHQAVLAIGQELNRRTLGDSSPGWISQVRRRSSLLGSQLEAALYSEQELSYIQQGEVAMQKALSILSNQEGWKKENQQENGDEVLSKVVPDVGKVFRLEVVVDQPMDRLYAELVDRMEAMGEWNPNVKEIKVLQKIGKDTVITHELAAAAAGNLVGPRDFVSVRCAKRRGSTCVLAGIATHFGEMPEQSGVIRAEQGPTCMVLHPLAGSPSKTKFTWLLSIDLKGWLPKSIINQVLSQTQMEFANHLRKRLESSSASEARC.

The N-terminal 62 residues, 1-62, are a transit peptide targeting the mitochondrion; it reads MLLATFKLCA…RRSSLLGSQL (62 aa). Phosphoserine; by PKA is present on residues serine 56 and serine 194. One can recognise an START domain in the interval 66–279; the sequence is LYSEQELSYI…LRKRLESSSA (214 aa).

May interact with TSPO.

Its subcellular location is the mitochondrion. The protein operates within steroid metabolism; cholesterol metabolism. In terms of biological role, plays a key role in steroid hormone synthesis by enhancing the metabolism of cholesterol into pregnenolone. Mediates the transfer of cholesterol from the outer mitochondrial membrane to the inner mitochondrial membrane where it is cleaved to pregnenolone. The polypeptide is Steroidogenic acute regulatory protein, mitochondrial (STAR) (Mesocricetus auratus (Golden hamster)).